A 203-amino-acid chain; its full sequence is Small ribosomal subunit protein uS7 (203 aa).

The tract at residues 1–22 (MSESEAPEPDQPAGAEEATGAK) is disordered.

Belongs to the universal ribosomal protein uS7 family. Part of the 30S ribosomal subunit.

Its function is as follows. One of the primary rRNA binding proteins, it binds directly to 16S rRNA where it nucleates assembly of the head domain of the 30S subunit. Is located at the subunit interface close to the decoding center. This chain is Small ribosomal subunit protein uS7, found in Halococcus morrhuae (Micrococcus morrhuae).